The primary structure comprises 116 residues: uncharacterized protein (116 aa).

The 72-residue stretch at 2–73 folds into the N-acetylmuramoyl-L-alanine amidase domain; sequence DGSVGTGRQV…PKALICGHRD (72 aa).

The protein to phage T3 and T7 N-acetylmuramoyl-L-alanine amidases.

This is an uncharacterized protein from Haemophilus influenzae (strain ATCC 51907 / DSM 11121 / KW20 / Rd).